The chain runs to 257 residues: Aspartate/glutamate leucyltransferase (257 aa).

The protein belongs to the R-transferase family. Bpt subfamily.

It is found in the cytoplasm. The catalysed reaction is N-terminal L-glutamyl-[protein] + L-leucyl-tRNA(Leu) = N-terminal L-leucyl-L-glutamyl-[protein] + tRNA(Leu) + H(+). The enzyme catalyses N-terminal L-aspartyl-[protein] + L-leucyl-tRNA(Leu) = N-terminal L-leucyl-L-aspartyl-[protein] + tRNA(Leu) + H(+). In terms of biological role, functions in the N-end rule pathway of protein degradation where it conjugates Leu from its aminoacyl-tRNA to the N-termini of proteins containing an N-terminal aspartate or glutamate. In Nitrobacter winogradskyi (strain ATCC 25391 / DSM 10237 / CIP 104748 / NCIMB 11846 / Nb-255), this protein is Aspartate/glutamate leucyltransferase.